A 104-amino-acid polypeptide reads, in one-letter code: ATP-dependent Clp protease adapter protein ClpS (104 aa).

Belongs to the ClpS family. In terms of assembly, binds to the N-terminal domain of the chaperone ClpA.

Its function is as follows. Involved in the modulation of the specificity of the ClpAP-mediated ATP-dependent protein degradation. The sequence is that of ATP-dependent Clp protease adapter protein ClpS from Hydrogenovibrio crunogenus (strain DSM 25203 / XCL-2) (Thiomicrospira crunogena).